The chain runs to 296 residues: Mycothiol acetyltransferase (296 aa).

2 consecutive N-acetyltransferase domains span residues 8-146 (RSPE…PPVE) and 151-296 (ISVR…GPPV). Glu-39 contributes to the 1D-myo-inositol 2-(L-cysteinylamino)-2-deoxy-alpha-D-glucopyranoside binding site. 76-78 (VVT) provides a ligand contact to acetyl-CoA. Residues Glu-178, Lys-220, and Glu-228 each contribute to the 1D-myo-inositol 2-(L-cysteinylamino)-2-deoxy-alpha-D-glucopyranoside site. Acetyl-CoA contacts are provided by residues 232 to 234 (VGV) and 239 to 245 (QGEGLGR). Tyr-266 is a binding site for 1D-myo-inositol 2-(L-cysteinylamino)-2-deoxy-alpha-D-glucopyranoside.

This sequence belongs to the acetyltransferase family. MshD subfamily. Monomer.

It carries out the reaction 1D-myo-inositol 2-(L-cysteinylamino)-2-deoxy-alpha-D-glucopyranoside + acetyl-CoA = mycothiol + CoA + H(+). Catalyzes the transfer of acetyl from acetyl-CoA to desacetylmycothiol (Cys-GlcN-Ins) to form mycothiol. The chain is Mycothiol acetyltransferase from Kytococcus sedentarius (strain ATCC 14392 / DSM 20547 / JCM 11482 / CCUG 33030 / NBRC 15357 / NCTC 11040 / CCM 314 / 541) (Micrococcus sedentarius).